The primary structure comprises 332 residues: Probable thc operon regulatory protein (332 aa).

In terms of domain architecture, HTH araC/xylS-type spans 227-328; it reads RLAVDYLEAH…GVSPSEDLRT (102 aa). 2 consecutive DNA-binding regions (H-T-H motif) follow at residues 244–265 and 295–318; these read AQVA…QNSL and VTEI…KQTF.

Its function is as follows. Probably involved in the positive regulation of the thc operon for the degradation of the thiocarbamate herbicide EPTC. The polypeptide is Probable thc operon regulatory protein (thcR) (Rhodococcus erythropolis (Arthrobacter picolinophilus)).